Reading from the N-terminus, the 103-residue chain is ATP-dependent Clp protease adapter protein ClpS (103 aa).

Belongs to the ClpS family. As to quaternary structure, binds to the N-terminal domain of the chaperone ClpA.

Functionally, involved in the modulation of the specificity of the ClpAP-mediated ATP-dependent protein degradation. The polypeptide is ATP-dependent Clp protease adapter protein ClpS (Nitrosomonas eutropha (strain DSM 101675 / C91 / Nm57)).